A 366-amino-acid polypeptide reads, in one-letter code: Aminomethyltransferase (366 aa).

The protein belongs to the GcvT family. The glycine cleavage system is composed of four proteins: P, T, L and H.

The enzyme catalyses N(6)-[(R)-S(8)-aminomethyldihydrolipoyl]-L-lysyl-[protein] + (6S)-5,6,7,8-tetrahydrofolate = N(6)-[(R)-dihydrolipoyl]-L-lysyl-[protein] + (6R)-5,10-methylene-5,6,7,8-tetrahydrofolate + NH4(+). In terms of biological role, the glycine cleavage system catalyzes the degradation of glycine. This chain is Aminomethyltransferase, found in Bacillus velezensis (strain DSM 23117 / BGSC 10A6 / LMG 26770 / FZB42) (Bacillus amyloliquefaciens subsp. plantarum).